The following is a 208-amino-acid chain: Small ribosomal subunit protein uS4 (208 aa).

The S4 RNA-binding domain occupies 98–161; it reads RRLDNVVYRM…KSNPQVVRAM (64 aa).

Belongs to the universal ribosomal protein uS4 family. As to quaternary structure, part of the 30S ribosomal subunit. Contacts protein S5. The interaction surface between S4 and S5 is involved in control of translational fidelity.

In terms of biological role, one of the primary rRNA binding proteins, it binds directly to 16S rRNA where it nucleates assembly of the body of the 30S subunit. Functionally, with S5 and S12 plays an important role in translational accuracy. This Helicobacter acinonychis (strain Sheeba) protein is Small ribosomal subunit protein uS4.